The primary structure comprises 856 residues: DNA mismatch repair protein MutS (856 aa).

611–618 (GPNMGGKS) lines the ATP pocket.

The protein belongs to the DNA mismatch repair MutS family.

In terms of biological role, this protein is involved in the repair of mismatches in DNA. It is possible that it carries out the mismatch recognition step. This protein has a weak ATPase activity. This is DNA mismatch repair protein MutS from Histophilus somni (strain 129Pt) (Haemophilus somnus).